The sequence spans 466 residues: Argininosuccinate lyase (466 aa).

2-(N(omega)-L-arginino)succinate is bound by residues serine 27, asparagine 114, and threonine 159. Residue histidine 160 is the Proton acceptor of the active site. Catalysis depends on serine 281, which acts as the Proton donor. Residues asparagine 289, tyrosine 321, glutamine 326, and lysine 329 each contribute to the 2-(N(omega)-L-arginino)succinate site.

The protein belongs to the lyase 1 family. Argininosuccinate lyase subfamily. In terms of assembly, homotetramer. As to expression, eye lens.

It carries out the reaction 2-(N(omega)-L-arginino)succinate = fumarate + L-arginine. The protein operates within amino-acid biosynthesis; L-arginine biosynthesis; L-arginine from L-ornithine and carbamoyl phosphate: step 3/3. Its function is as follows. Delta crystallin, the principal crystallin in embryonic lens, is found only in birds and reptiles. This protein may also function as an enzymatically active argininosuccinate lyase. This Gallus gallus (Chicken) protein is Argininosuccinate lyase (ASL2).